The chain runs to 305 residues: tRNA uridine(34) hydroxylase (305 aa).

Residues 125–219 form the Rhodanese domain; the sequence is ADENTVVVDT…YLEEVPREQS (95 aa). Cys-179 (cysteine persulfide intermediate) is an active-site residue.

The protein belongs to the TrhO family.

It carries out the reaction uridine(34) in tRNA + AH2 + O2 = 5-hydroxyuridine(34) in tRNA + A + H2O. Catalyzes oxygen-dependent 5-hydroxyuridine (ho5U) modification at position 34 in tRNAs. The sequence is that of tRNA uridine(34) hydroxylase from Brucella ovis (strain ATCC 25840 / 63/290 / NCTC 10512).